We begin with the raw amino-acid sequence, 872 residues long: Alanine--tRNA ligase (872 aa).

Zn(2+) is bound by residues histidine 567, histidine 571, cysteine 669, and histidine 673.

This sequence belongs to the class-II aminoacyl-tRNA synthetase family. Requires Zn(2+) as cofactor.

Its subcellular location is the cytoplasm. It carries out the reaction tRNA(Ala) + L-alanine + ATP = L-alanyl-tRNA(Ala) + AMP + diphosphate. Functionally, catalyzes the attachment of alanine to tRNA(Ala) in a two-step reaction: alanine is first activated by ATP to form Ala-AMP and then transferred to the acceptor end of tRNA(Ala). Also edits incorrectly charged Ser-tRNA(Ala) and Gly-tRNA(Ala) via its editing domain. The sequence is that of Alanine--tRNA ligase from Streptococcus gordonii (strain Challis / ATCC 35105 / BCRC 15272 / CH1 / DL1 / V288).